The following is a 127-amino-acid chain: Small ribosomal subunit protein uS12 (127 aa).

The residue at position 89 (Asp-89) is a 3-methylthioaspartic acid. The tract at residues 101–127 (ALDTSGVAGRTQRRSKYGAKRPKEAKK) is disordered. The segment covering 111-127 (TQRRSKYGAKRPKEAKK) has biased composition (basic residues).

Belongs to the universal ribosomal protein uS12 family. As to quaternary structure, part of the 30S ribosomal subunit. Contacts proteins S8 and S17. May interact with IF1 in the 30S initiation complex.

Functionally, with S4 and S5 plays an important role in translational accuracy. In terms of biological role, interacts with and stabilizes bases of the 16S rRNA that are involved in tRNA selection in the A site and with the mRNA backbone. Located at the interface of the 30S and 50S subunits, it traverses the body of the 30S subunit contacting proteins on the other side and probably holding the rRNA structure together. The combined cluster of proteins S8, S12 and S17 appears to hold together the shoulder and platform of the 30S subunit. This Flavobacterium johnsoniae (strain ATCC 17061 / DSM 2064 / JCM 8514 / BCRC 14874 / CCUG 350202 / NBRC 14942 / NCIMB 11054 / UW101) (Cytophaga johnsonae) protein is Small ribosomal subunit protein uS12.